We begin with the raw amino-acid sequence, 582 residues long: Hemagglutinin-neuraminidase (582 aa).

At 1–34 the chain is on the intravirion side; sequence MEPSKLFTMSDNATFAPGPVVNAADKKTFRTCFR. The helical transmembrane segment at 35–55 threads the bilayer; the sequence is ILVLSVQAVTLILVIVTLGEL. Over 56–582 the chain is Virion surface; the sequence is VRMINDQGLS…LPVLTRLTIT (527 aa). 3 cysteine pairs are disulfide-bonded: Cys178/Cys202, Cys192/Cys253, and Cys244/Cys257. N-linked (GlcNAc...) asparagine; by host glycosylation is found at Asn284 and Asn329. Cystine bridges form between Cys350-Cys471, Cys382-Cys392, and Cys465-Cys475. 2 N-linked (GlcNAc...) asparagine; by host glycosylation sites follow: Asn400 and Asn448. Asn507 carries N-linked (GlcNAc...) asparagine; by host glycosylation. Cys545 and Cys556 are oxidised to a cystine.

It belongs to the paramyxoviruses hemagglutinin-neuraminidase family. In terms of assembly, homotetramer; composed of disulfide-linked homodimers. Interacts with F protein trimer.

It localises to the virion membrane. The protein resides in the host cell membrane. It catalyses the reaction Hydrolysis of alpha-(2-&gt;3)-, alpha-(2-&gt;6)-, alpha-(2-&gt;8)- glycosidic linkages of terminal sialic acid residues in oligosaccharides, glycoproteins, glycolipids, colominic acid and synthetic substrates.. Attaches the virus to alpha-2,3-linked sialic acid-containing cell receptors and thereby initiating infection. Binding of HN protein to the receptor induces a conformational change that allows the F protein to trigger virion/cell membranes fusion. Binds to the glycan motifs sialyl Lewis (SLe) and GM2 ganglioside (GM2-glycan). Its function is as follows. Neuraminidase activity ensures the efficient spread of the virus by dissociating the mature virions from the neuraminic acid containing glycoproteins. The chain is Hemagglutinin-neuraminidase from Mumps orthorubulavirus (MuV).